The sequence spans 514 residues: ATP synthase subunit alpha (514 aa).

170–177 (GDRQIGKT) is an ATP binding site.

The protein belongs to the ATPase alpha/beta chains family. F-type ATPases have 2 components, CF(1) - the catalytic core - and CF(0) - the membrane proton channel. CF(1) has five subunits: alpha(3), beta(3), gamma(1), delta(1), epsilon(1). CF(0) has three main subunits: a(1), b(2) and c(9-12). The alpha and beta chains form an alternating ring which encloses part of the gamma chain. CF(1) is attached to CF(0) by a central stalk formed by the gamma and epsilon chains, while a peripheral stalk is formed by the delta and b chains.

The protein localises to the cell inner membrane. It carries out the reaction ATP + H2O + 4 H(+)(in) = ADP + phosphate + 5 H(+)(out). Functionally, produces ATP from ADP in the presence of a proton gradient across the membrane. The alpha chain is a regulatory subunit. In Pseudomonas entomophila (strain L48), this protein is ATP synthase subunit alpha.